The primary structure comprises 345 residues: Glycerol-3-phosphate dehydrogenase [NAD(P)+] (345 aa).

Residues Ser-11, Trp-12, Arg-32, Arg-33, and Lys-105 each contribute to the NADPH site. 3 residues coordinate sn-glycerol 3-phosphate: Lys-105, Gly-136, and Ser-138. Ala-140 lines the NADPH pocket. Residues Lys-191, Asp-244, Ser-254, Arg-255, and Asn-256 each contribute to the sn-glycerol 3-phosphate site. Catalysis depends on Lys-191, which acts as the Proton acceptor. Residue Arg-255 participates in NADPH binding. The NADPH site is built by Val-279 and Glu-281.

It belongs to the NAD-dependent glycerol-3-phosphate dehydrogenase family.

The protein localises to the cytoplasm. It carries out the reaction sn-glycerol 3-phosphate + NAD(+) = dihydroxyacetone phosphate + NADH + H(+). It catalyses the reaction sn-glycerol 3-phosphate + NADP(+) = dihydroxyacetone phosphate + NADPH + H(+). Its pathway is membrane lipid metabolism; glycerophospholipid metabolism. Its function is as follows. Catalyzes the reduction of the glycolytic intermediate dihydroxyacetone phosphate (DHAP) to sn-glycerol 3-phosphate (G3P), the key precursor for phospholipid synthesis. This is Glycerol-3-phosphate dehydrogenase [NAD(P)+] from Halalkalibacterium halodurans (strain ATCC BAA-125 / DSM 18197 / FERM 7344 / JCM 9153 / C-125) (Bacillus halodurans).